Consider the following 289-residue polypeptide: Ribosomal RNA small subunit methyltransferase A (289 aa).

The S-adenosyl-L-methionine site is built by asparagine 21, leucine 23, glycine 48, glutamate 69, aspartate 94, and asparagine 120.

This sequence belongs to the class I-like SAM-binding methyltransferase superfamily. rRNA adenine N(6)-methyltransferase family. RsmA subfamily.

The protein resides in the cytoplasm. It catalyses the reaction adenosine(1518)/adenosine(1519) in 16S rRNA + 4 S-adenosyl-L-methionine = N(6)-dimethyladenosine(1518)/N(6)-dimethyladenosine(1519) in 16S rRNA + 4 S-adenosyl-L-homocysteine + 4 H(+). Specifically dimethylates two adjacent adenosines (A1518 and A1519) in the loop of a conserved hairpin near the 3'-end of 16S rRNA in the 30S particle. May play a critical role in biogenesis of 30S subunits. The protein is Ribosomal RNA small subunit methyltransferase A of Haemophilus ducreyi (strain 35000HP / ATCC 700724).